The primary structure comprises 2067 residues: Nuclear receptor coactivator 6 (2067 aa).

Residues 1–932 are TBP/GTF2A-binding region; sequence MVLDDLPNFE…PPRKKKNCHQ (932 aa). Residues 1–1060 form a CREBBP-binding region region; it reads MVLDDLPNFE…LPVSQNVHPP (1060 aa). Positions 1 to 1314 are NCOA1-binding region; the sequence is MVLDDLPNFE…QAHKLDSVVV (1314 aa). R95 carries the post-translational modification Asymmetric dimethylarginine. Disordered stretches follow at residues 181–253 and 293–548; these read AVMT…RQMN and TRPL…PGNS. Over residues 293–304 the composition is skewed to low complexity; that stretch reads TRPLQQHQQQPQ. 6 stretches are compositionally biased toward polar residues: residues 338-347, 357-372, 383-405, 421-457, 465-506, and 526-548; these read SLGTMTTNQG, MQAQ…TVQT, GSQQ…QFTA, PLQQ…QQQM, NPLS…QGPQ, and GQAN…PGNS. The interval 777–931 is NCOA6IP-binding region; it reads VNNSPSQVMG…KPPRKKKNCH (155 aa). S888 is subject to Phosphoserine. Positions 891–895 match the LXXLL motif 1 motif; that stretch reads LVNLL. Disordered stretches follow at residues 903–1279, 1313–1358, 1424–1481, 1497–1581, and 1769–1822; these read HFGV…QGLN, VVNS…APKL, NIPQ…EENK, QLLD…IPPV, and LNPD…GKGK. Residues 907–916 show a composition bias toward low complexity; sequence NNKQNNTNAN. Residues 917–929 are compositionally biased toward basic residues; sequence KPKKKKPPRKKKN. Low complexity predominate over residues 984-996; the sequence is QRPLPQMPPQLMQ. Over residues 999–1024 the composition is skewed to pro residues; sequence APPPQPPQQQPQPQLPQQQQPPPPSQ. Residues 1025–1044 are compositionally biased toward low complexity; sequence PQSQQQQQQQQMMMMLMMQQ. Residues R1050 and R1061 each carry the asymmetric dimethylarginine modification. Positions 1066–1078 are enriched in polar residues; that stretch reads PDSQRMPVQQSGN. R1099 carries the post-translational modification Asymmetric dimethylarginine. Polar residues predominate over residues 1103–1123; that stretch reads SVNTPMGSNSRKMVYQENPQN. Low complexity predominate over residues 1124 to 1137; that stretch reads SSSSPLGEMSSLPE. Composition is skewed to polar residues over residues 1152–1165, 1176–1194, and 1205–1217; these read NMPS…NQLM, LSAT…SLPS, and APTQ…TPNR. A compositionally biased stretch (pro residues) spans 1222–1235; sequence PYYPQTPNNRPPST. Positions 1313–1324 are enriched in polar residues; sequence VVNSGKQSNPGT. Positions 1326 to 1349 are enriched in low complexity; sequence KRASPSNSRRSSPGSSRKTTPSPG. Residues 1424 to 1435 are compositionally biased toward polar residues; the sequence is NIPQDSDCQNAQ. Residues 1495-1499 carry the LXXLL motif 2 motif; it reads LSQLL. Low complexity predominate over residues 1545–1562; the sequence is EPSTSLSSPHSSEPCSTL. The EP300/CRSP3-binding region stretch occupies residues 1644 to 2067; the sequence is SEGQSAAQSN…AVQSKRRKSK (424 aa). The segment covering 1775–1805 has biased composition (polar residues); the sequence is SPQTNTSADQSTLPPSQPTTVVSSLLTNSPG. The span at 1806–1818 shows a compositional bias: low complexity; it reads SSANRRSPVSSSK. K1822 and K1825 each carry N6-acetyllysine. Disordered regions lie at residues 1840 to 1911 and 1957 to 2067; these read GSLE…LPGG and VGSH…RKSK. A compositionally biased stretch (polar residues) spans 1871 to 1883; the sequence is EQCSTELDSKTPT. A compositionally biased stretch (low complexity) spans 1892–1904; sequence MTSSPMAPSSTST. Positions 2005–2014 are enriched in basic and acidic residues; that stretch reads EPKEIVEKSK. At S2022 the chain carries Phosphoserine.

In terms of assembly, monomer and homodimer. Interacts in vitro with the basal transcription factors GTF2A and TBP, suggesting an autonomous transactivation function. Interacts with NCOA1, CRSP3, RBM14, the histone acetyltransferase proteins EP300 and CREBBP, and with methyltransferase proteins NCOA6IP and PRMT2. Interacts with RBM39. Component of the MLL2/3 complex (also named ASCOM complex), at least composed of KMT2D/MLL2 or KMT2C/MLL3, ASH2L, RBBP5, WDR5, NCOA6, DPY30, KDM6A, PAXIP1/PTIP, PAGR1 and alpha- and beta-tubulin. Interacts with ZNF335; may enhance ligand-dependent transcriptional activation by nuclear hormone receptors. In terms of processing, phosphorylated. Widely expressed. High expression in testis and weak expression in small intestine.

The protein localises to the nucleus. In terms of biological role, nuclear receptor coactivator that directly binds nuclear receptors and stimulates the transcriptional activities in a hormone-dependent fashion. Coactivates expression in an agonist- and AF2-dependent manner. Involved in the coactivation of different nuclear receptors, such as for steroids (GR and ERs), retinoids (RARs and RXRs), thyroid hormone (TRs), vitamin D3 (VDR) and prostanoids (PPARs). Probably functions as a general coactivator, rather than just a nuclear receptor coactivator. May also be involved in the coactivation of the NF-kappa-B pathway. May coactivate expression via a remodeling of chromatin and its interaction with histone acetyltransferase proteins. Involved in placental, cardiac, hepatic and embryonic development. The protein is Nuclear receptor coactivator 6 (Ncoa6) of Mus musculus (Mouse).